We begin with the raw amino-acid sequence, 741 residues long: Wall-associated receptor kinase 3 (741 aa).

Positions 1–23 (MKFQEGVFLVVIFFLAYTQLVKG) are cleaved as a signal peptide. The Extracellular segment spans residues 24 to 342 (QHQPREDCKL…CTRPEYKRTR (319 aa)). 12 N-linked (GlcNAc...) asparagine glycosylation sites follow: asparagine 37, asparagine 59, asparagine 78, asparagine 100, asparagine 103, asparagine 141, asparagine 192, asparagine 199, asparagine 232, asparagine 246, asparagine 261, and asparagine 266. The EGF-like 1 domain maps to 245–292 (GNQTCEQAGSTRICGKNSSCYNSTTRNGYICKCNEGYDGNPYRSEGCK). 6 disulfide bridges follow: cysteine 249-cysteine 264, cysteine 258-cysteine 275, cysteine 277-cysteine 291, cysteine 297-cysteine 310, cysteine 304-cysteine 319, and cysteine 321-cysteine 333. An EGF-like 2; calcium-binding domain is found at 293–334 (DIDECISDTHNCSDPKTCRNRDGGFDCKCPSGYDLNSSMSCT). Residue asparagine 303 is glycosylated (N-linked (GlcNAc...) asparagine). A glycan (N-linked (GlcNAc...) asparagine) is linked at asparagine 328. Residues 343-363 (IFLVIIIGVLVLLLAAICIQH) form a helical membrane-spanning segment. Topologically, residues 364–741 (ATKQRKYTKL…VAILDIETGR (378 aa)) are cytoplasmic. Threonine 404 carries the post-translational modification Phosphothreonine. The Protein kinase domain maps to 415-698 (YDESRILGQG…RVEKTKHKWS (284 aa)). Residues 421–429 (LGQGGQGTV) and lysine 443 each bind ATP. Phosphotyrosine is present on tyrosine 488. Aspartate 540 acts as the Proton acceptor in catalysis. Residues threonine 574 and threonine 579 each carry the phosphothreonine modification. A Phosphotyrosine modification is found at tyrosine 587.

The protein belongs to the protein kinase superfamily. Ser/Thr protein kinase family. Predominantly expressed in green tissues such as stems and leaves.

It is found in the membrane. The enzyme catalyses L-seryl-[protein] + ATP = O-phospho-L-seryl-[protein] + ADP + H(+). The catalysed reaction is L-threonyl-[protein] + ATP = O-phospho-L-threonyl-[protein] + ADP + H(+). Serine/threonine-protein kinase that may function as a signaling receptor of extracellular matrix component. Binding to pectin may have significance in the control of cell expansion, morphogenesis and development. The sequence is that of Wall-associated receptor kinase 3 (WAK3) from Arabidopsis thaliana (Mouse-ear cress).